Reading from the N-terminus, the 446-residue chain is Glutamate-1-semialdehyde 2,1-aminomutase (446 aa).

The residue at position 263 (lysine 263) is an N6-(pyridoxal phosphate)lysine.

Belongs to the class-III pyridoxal-phosphate-dependent aminotransferase family. HemL subfamily. Pyridoxal 5'-phosphate is required as a cofactor.

It localises to the cytoplasm. The catalysed reaction is (S)-4-amino-5-oxopentanoate = 5-aminolevulinate. Its pathway is porphyrin-containing compound metabolism; protoporphyrin-IX biosynthesis; 5-aminolevulinate from L-glutamyl-tRNA(Glu): step 2/2. The protein is Glutamate-1-semialdehyde 2,1-aminomutase of Haloquadratum walsbyi (strain DSM 16790 / HBSQ001).